We begin with the raw amino-acid sequence, 634 residues long: Probable beta-glucosidase C (634 aa).

Residues 1–19 (MRIDCTVASLTALASGCQA) form the signal peptide. Residues Asn-90, Asn-112, Asn-219, and Asn-270 are each glycosylated (N-linked (GlcNAc...) asparagine). Residue Asp-337 is part of the active site. N-linked (GlcNAc...) asparagine glycans are attached at residues Asn-360, Asn-476, Asn-484, and Asn-524.

This sequence belongs to the glycosyl hydrolase 3 family.

The protein localises to the secreted. It catalyses the reaction Hydrolysis of terminal, non-reducing beta-D-glucosyl residues with release of beta-D-glucose.. It participates in glycan metabolism; cellulose degradation. In terms of biological role, beta-glucosidases are one of a number of cellulolytic enzymes involved in the degradation of cellulosic biomass. Catalyzes the last step releasing glucose from the inhibitory cellobiose. This Aspergillus flavus (strain ATCC 200026 / FGSC A1120 / IAM 13836 / NRRL 3357 / JCM 12722 / SRRC 167) protein is Probable beta-glucosidase C (bglC).